The sequence spans 53 residues: Metallothionein (53 aa).

Belongs to the metallothionein superfamily. Type 14 family.

Its function is as follows. This protein complexes cadmium, zinc and copper. This is Metallothionein from Synechococcus sp.